Consider the following 212-residue polypeptide: Large ribosomal subunit protein uL1 (212 aa).

This sequence belongs to the universal ribosomal protein uL1 family. Part of the 50S ribosomal subunit.

Functionally, binds directly to 23S rRNA. Probably involved in E site tRNA release. Protein L1 is also a translational repressor protein, it controls the translation of its operon by binding to its mRNA. This is Large ribosomal subunit protein uL1 from Natronomonas pharaonis (strain ATCC 35678 / DSM 2160 / CIP 103997 / JCM 8858 / NBRC 14720 / NCIMB 2260 / Gabara) (Halobacterium pharaonis).